The primary structure comprises 225 residues: NAD(P)H-quinone oxidoreductase subunit K, chloroplastic (225 aa).

Residues cysteine 43, cysteine 44, cysteine 108, and cysteine 139 each contribute to the [4Fe-4S] cluster site.

It belongs to the complex I 20 kDa subunit family. NDH is composed of at least 16 different subunits, 5 of which are encoded in the nucleus. Requires [4Fe-4S] cluster as cofactor.

It is found in the plastid. It localises to the chloroplast thylakoid membrane. The enzyme catalyses a plastoquinone + NADH + (n+1) H(+)(in) = a plastoquinol + NAD(+) + n H(+)(out). It carries out the reaction a plastoquinone + NADPH + (n+1) H(+)(in) = a plastoquinol + NADP(+) + n H(+)(out). Its function is as follows. NDH shuttles electrons from NAD(P)H:plastoquinone, via FMN and iron-sulfur (Fe-S) centers, to quinones in the photosynthetic chain and possibly in a chloroplast respiratory chain. The immediate electron acceptor for the enzyme in this species is believed to be plastoquinone. Couples the redox reaction to proton translocation, and thus conserves the redox energy in a proton gradient. The polypeptide is NAD(P)H-quinone oxidoreductase subunit K, chloroplastic (Agrostis stolonifera (Creeping bentgrass)).